The primary structure comprises 850 residues: Receptor-like protein kinase ANXUR1 (850 aa).

Positions M1–G26 are cleaved as a signal peptide. The Extracellular segment spans residues Q27–H429. N114, N132, N292, N302, and N330 each carry an N-linked (GlcNAc...) asparagine glycan. The helical transmembrane segment at A430 to T450 threads the bilayer. The Cytoplasmic portion of the chain corresponds to A451–R850. The 274-residue stretch at F517–A790 folds into the Protein kinase domain. ATP contacts are provided by residues I523–V531 and K545. D641 acts as the Proton acceptor in catalysis. The tract at residues T796 to R850 is disordered. Polar residues predominate over residues E839–R850.

Belongs to the protein kinase superfamily. Ser/Thr protein kinase family. As to expression, expressed in pollen, but not in pistils or seedlings.

The protein localises to the cell membrane. The enzyme catalyses L-seryl-[protein] + ATP = O-phospho-L-seryl-[protein] + ADP + H(+). It carries out the reaction L-threonyl-[protein] + ATP = O-phospho-L-threonyl-[protein] + ADP + H(+). Functionally, receptor-like protein kinase that controls pollen tube behavior by directing rupture at proper timing to release the sperm cell. The chain is Receptor-like protein kinase ANXUR1 (ANX1) from Arabidopsis thaliana (Mouse-ear cress).